The following is a 134-amino-acid chain: NADPH-dependent 7-cyano-7-deazaguanine reductase (134 aa).

C48 serves as the catalytic Thioimide intermediate. Catalysis depends on D55, which acts as the Proton donor. Substrate is bound by residues 70-72 and 89-90; these read VEL and QE.

It belongs to the GTP cyclohydrolase I family. QueF type 1 subfamily.

Its subcellular location is the cytoplasm. It carries out the reaction 7-aminomethyl-7-carbaguanine + 2 NADP(+) = 7-cyano-7-deazaguanine + 2 NADPH + 3 H(+). Its pathway is tRNA modification; tRNA-queuosine biosynthesis. Functionally, catalyzes the NADPH-dependent reduction of 7-cyano-7-deazaguanine (preQ0) to 7-aminomethyl-7-deazaguanine (preQ1). The chain is NADPH-dependent 7-cyano-7-deazaguanine reductase from Caldanaerobacter subterraneus subsp. tengcongensis (strain DSM 15242 / JCM 11007 / NBRC 100824 / MB4) (Thermoanaerobacter tengcongensis).